A 343-amino-acid polypeptide reads, in one-letter code: Calcium/calmodulin-dependent protein kinase type 1B (343 aa).

The Protein kinase domain occupies 15–270 (YEIRERLGSG…CQQALRHLWI (256 aa)). ATP is bound by residues 21–29 (LGSGAFSEV) and K44. The Proton acceptor role is filled by D136. The interval 290–311 (KNFARTHWKRAFNATSFLRHIR) is calmodulin-binding. The tract at residues 319-343 (GEGASEQGMARHSHSGLRAGQPPKW) is disordered.

Belongs to the protein kinase superfamily. CAMK Ser/Thr protein kinase family. CaMK subfamily. Post-translationally, phosphorylated by CAMKK1.

The protein resides in the cytoplasm. Its subcellular location is the nucleus. It catalyses the reaction L-seryl-[protein] + ATP = O-phospho-L-seryl-[protein] + ADP + H(+). The enzyme catalyses L-threonyl-[protein] + ATP = O-phospho-L-threonyl-[protein] + ADP + H(+). Its activity is regulated as follows. Activated by Ca(2+)/calmodulin. Functionally, calcium/calmodulin-dependent protein kinase belonging to a proposed calcium-triggered signaling cascade. In vitro phosphorylates CREB1 and SYN1/synapsin I. Phosphorylates and activates CAMK1. The chain is Calcium/calmodulin-dependent protein kinase type 1B (PNCK) from Homo sapiens (Human).